We begin with the raw amino-acid sequence, 509 residues long: 3-octaprenyl-4-hydroxybenzoate carboxy-lyase (509 aa).

Position 179 (Asn-179) interacts with Mn(2+). Residues 182-184 (IYR), 196-198 (RWL), and 201-202 (RG) each bind prenylated FMN. A Mn(2+)-binding site is contributed by Glu-245. Asp-304 serves as the catalytic Proton donor.

The protein belongs to the UbiD family. Homohexamer. The cofactor is prenylated FMN. Requires Mn(2+) as cofactor.

It is found in the cell membrane. The enzyme catalyses a 4-hydroxy-3-(all-trans-polyprenyl)benzoate + H(+) = a 2-(all-trans-polyprenyl)phenol + CO2. It participates in cofactor biosynthesis; ubiquinone biosynthesis. In terms of biological role, catalyzes the decarboxylation of 3-octaprenyl-4-hydroxy benzoate to 2-octaprenylphenol, an intermediate step in ubiquinone biosynthesis. The protein is 3-octaprenyl-4-hydroxybenzoate carboxy-lyase of Cupriavidus pinatubonensis (strain JMP 134 / LMG 1197) (Cupriavidus necator (strain JMP 134)).